The chain runs to 303 residues: N-acetyl-D-glucosamine kinase (303 aa).

ATP is bound by residues 4-11 and 133-140; these read GFDIGGTK and GVGGGLIF. Positions 157, 177, 179, and 184 each coordinate Zn(2+).

This sequence belongs to the ROK (NagC/XylR) family. NagK subfamily.

The catalysed reaction is N-acetyl-D-glucosamine + ATP = N-acetyl-D-glucosamine 6-phosphate + ADP + H(+). It functions in the pathway cell wall biogenesis; peptidoglycan recycling. Functionally, catalyzes the phosphorylation of N-acetyl-D-glucosamine (GlcNAc) derived from cell-wall degradation, yielding GlcNAc-6-P. The sequence is that of N-acetyl-D-glucosamine kinase from Escherichia coli O9:H4 (strain HS).